A 395-amino-acid chain; its full sequence is S-adenosylmethionine synthase (395 aa).

Histidine 12 lines the ATP pocket. Residue aspartate 14 participates in Mg(2+) binding. Residue glutamate 40 coordinates K(+). L-methionine-binding residues include glutamate 53 and glutamine 96. The flexible loop stretch occupies residues 96–106 (QSKEIADAVNF). ATP-binding positions include 174-176 (DGK), 242-243 (RF), aspartate 251, 257-258 (RK), alanine 274, and lysine 278. Residue aspartate 251 coordinates L-methionine. Residue lysine 282 coordinates L-methionine.

This sequence belongs to the AdoMet synthase family. Homotetramer; dimer of dimers. The cofactor is Mg(2+). K(+) serves as cofactor.

Its subcellular location is the cytoplasm. The enzyme catalyses L-methionine + ATP + H2O = S-adenosyl-L-methionine + phosphate + diphosphate. Its pathway is amino-acid biosynthesis; S-adenosyl-L-methionine biosynthesis; S-adenosyl-L-methionine from L-methionine: step 1/1. Its function is as follows. Catalyzes the formation of S-adenosylmethionine (AdoMet) from methionine and ATP. The overall synthetic reaction is composed of two sequential steps, AdoMet formation and the subsequent tripolyphosphate hydrolysis which occurs prior to release of AdoMet from the enzyme. The protein is S-adenosylmethionine synthase of Tropheryma whipplei (strain TW08/27) (Whipple's bacillus).